Here is a 225-residue protein sequence, read N- to C-terminus: uncharacterized protein (225 aa).

A helical transmembrane segment spans residues 12-32 (AGFMMIFVFVIASFLLVLLFF).

The protein resides in the cell membrane. This is an uncharacterized protein from Bacillus subtilis (strain 168).